The chain runs to 39 residues: Ribonuclease UK114 (39 aa).

It belongs to the RutC family. As to quaternary structure, monomer. The N-terminus may be blocked. As to expression, mainly expressed in the liver and kidney. Lower expression found in intestine, gizzard, glandular stomach, heart, brain and spleen.

Its subcellular location is the cytoplasm. Its function is as follows. Endoribonuclease responsible for the inhibition of the translation by cleaving mRNA. Inhibits cell-free protein synthesis. Cleaves phosphodiester bonds only in single-stranded RNA. This Gallus gallus (Chicken) protein is Ribonuclease UK114.